Consider the following 63-residue polypeptide: Large ribosomal subunit protein uL29 (63 aa).

Belongs to the universal ribosomal protein uL29 family.

The chain is Large ribosomal subunit protein uL29 from Pseudomonas fluorescens (strain ATCC BAA-477 / NRRL B-23932 / Pf-5).